Reading from the N-terminus, the 395-residue chain is Putative pyridoxal phosphate-dependent acyltransferase (395 aa).

Gly-110–Phe-111 provides a ligand contact to pyridoxal 5'-phosphate. His-135 serves as a coordination point for substrate. Pyridoxal 5'-phosphate is bound by residues Ser-185, Asp-210–His-213, and Thr-240–Lys-243. Lys-243 carries the post-translational modification N6-(pyridoxal phosphate)lysine. Residue Thr-357 coordinates substrate.

Belongs to the class-II pyridoxal-phosphate-dependent aminotransferase family. Homodimer. It depends on pyridoxal 5'-phosphate as a cofactor.

The protein is Putative pyridoxal phosphate-dependent acyltransferase of Staphylococcus aureus (strain COL).